Reading from the N-terminus, the 399-residue chain is Galactokinase (399 aa).

42–45 (EHTD) serves as a coordination point for substrate. ATP is bound by residues S76 and 133 to 139 (ASGLSSS). Mg(2+) is bound by residues S139 and E171. The active-site Proton acceptor is D183. Substrate is bound at residue Y233.

The protein belongs to the GHMP kinase family. GalK subfamily. Monomer.

The protein localises to the cytoplasm. It carries out the reaction alpha-D-galactose + ATP = alpha-D-galactose 1-phosphate + ADP + H(+). It participates in carbohydrate metabolism; galactose metabolism. Its function is as follows. Catalyzes the transfer of the gamma-phosphate of ATP to D-galactose to form alpha-D-galactose-1-phosphate (Gal-1-P). The sequence is that of Galactokinase from Lactococcus lactis subsp. lactis (strain IL1403) (Streptococcus lactis).